A 290-amino-acid polypeptide reads, in one-letter code: 2-hydroxy-6-oxo-6-(2'-aminophenyl)hexa-2,4-dienoic acid hydrolase (290 aa).

Catalysis depends on residues S114, D233, and H261.

It belongs to the DmpD/TodF/XylF esterase family. As to quaternary structure, homodimer.

The enzyme catalyses (2E,4E)-6-(2-aminophenyl)-2-hydroxy-6-oxohexa-2,4-dienoate + H2O = (2E)-2-hydroxypenta-2,4-dienoate + anthranilate + H(+). Its pathway is xenobiotic degradation; carbazole degradation. Involved in the degradation of carbazole, a toxic N-heterocyclic aromatic compound containing dibenzopyrrole system. Catalyzes the hydrolytic cleavage of a carbon-carbon bond of 2-hydroxy-6-oxo-6-(2'-aminophenyl)hexa-2,4-dienoic acid (HOPDA) to yield anthranilate. CarC is specific for 2-hydroxy-6-oxo-6-phenylhexa-2,4-dienoic acid (6-phenyl-HODA), and has little activity toward 2-hydroxy-6-oxohepta-2,4-dienoic acid and 2-hydroxymuconic semialdehyde. The effect of the presence of an amino group or hydroxyl group at the 2'-position of phenyl moiety of 6-phenyl-HODA on the enzyme activity is found to be small. The protein is 2-hydroxy-6-oxo-6-(2'-aminophenyl)hexa-2,4-dienoic acid hydrolase (carC) of Metapseudomonas resinovorans (Pseudomonas resinovorans).